A 559-amino-acid polypeptide reads, in one-letter code: Suppressor of tumorigenicity 7 protein-like (559 aa).

3 helical membrane passes run Gly39–Leu59, Phe83–Trp103, and Leu513–Leu533.

It belongs to the ST7 family.

The protein resides in the membrane. This chain is Suppressor of tumorigenicity 7 protein-like (St7l), found in Rattus norvegicus (Rat).